Here is a 364-residue protein sequence, read N- to C-terminus: DNA polymerase IV (364 aa).

Residues 8–189 (IIHIDMDCYF…LPLTKIPGVG (182 aa)) enclose the UmuC domain. Mg(2+) contacts are provided by D12 and D107. E108 is a catalytic residue.

This sequence belongs to the DNA polymerase type-Y family. Monomer. The cofactor is Mg(2+).

It localises to the cytoplasm. The catalysed reaction is DNA(n) + a 2'-deoxyribonucleoside 5'-triphosphate = DNA(n+1) + diphosphate. In terms of biological role, poorly processive, error-prone DNA polymerase involved in untargeted mutagenesis. Copies undamaged DNA at stalled replication forks, which arise in vivo from mismatched or misaligned primer ends. These misaligned primers can be extended by PolIV. Exhibits no 3'-5' exonuclease (proofreading) activity. May be involved in translesional synthesis, in conjunction with the beta clamp from PolIII. This is DNA polymerase IV from Shewanella woodyi (strain ATCC 51908 / MS32).